Consider the following 295-residue polypeptide: Probable alpha-L-glutamate ligase 1 (295 aa).

The ATP-grasp domain maps to 104–287 (MQLLSRKGIG…VANAIIEFIE (184 aa)). ATP-binding positions include lysine 141, 178–179 (EY), aspartate 187, and 211–213 (RSN). Mg(2+) is bound by residues aspartate 248, glutamate 260, and asparagine 262. Mn(2+)-binding residues include aspartate 248, glutamate 260, and asparagine 262.

It belongs to the RimK family. Mg(2+) is required as a cofactor. It depends on Mn(2+) as a cofactor.

The chain is Probable alpha-L-glutamate ligase 1 from Shewanella denitrificans (strain OS217 / ATCC BAA-1090 / DSM 15013).